Consider the following 189-residue polypeptide: Putative manganese efflux pump MntP (189 aa).

6 consecutive transmembrane segments (helical) span residues 3-23 (LSAT…ASIG), 41-61 (LIFG…GLFA), 65-85 (IMEW…MRMI), 103-123 (GFWL…AIGV), 132-152 (IVHT…LGMM), and 167-187 (ILGG…HLGY).

The protein belongs to the MntP (TC 9.B.29) family.

Its subcellular location is the cell inner membrane. Functionally, probably functions as a manganese efflux pump. In Serratia proteamaculans (strain 568), this protein is Putative manganese efflux pump MntP.